The following is a 282-amino-acid chain: NADPH-dependent 7-cyano-7-deazaguanine reductase (282 aa).

82–84 serves as a coordination point for substrate; sequence IES. 84 to 85 serves as a coordination point for NADPH; it reads SK. The active-site Thioimide intermediate is the C189. The active-site Proton donor is D196. Residue 228–229 participates in substrate binding; that stretch reads HE. Position 257-258 (257-258) interacts with NADPH; that stretch reads RG.

It belongs to the GTP cyclohydrolase I family. QueF type 2 subfamily. As to quaternary structure, homodimer.

It is found in the cytoplasm. The enzyme catalyses 7-aminomethyl-7-carbaguanine + 2 NADP(+) = 7-cyano-7-deazaguanine + 2 NADPH + 3 H(+). It participates in tRNA modification; tRNA-queuosine biosynthesis. Its function is as follows. Catalyzes the NADPH-dependent reduction of 7-cyano-7-deazaguanine (preQ0) to 7-aminomethyl-7-deazaguanine (preQ1). The sequence is that of NADPH-dependent 7-cyano-7-deazaguanine reductase from Delftia acidovorans (strain DSM 14801 / SPH-1).